Here is an 83-residue protein sequence, read N- to C-terminus: Putative membrane protein insertion efficiency factor (83 aa).

The segment at glycine 63–aspartate 83 is disordered. Residues valine 68–aspartate 83 show a composition bias toward basic and acidic residues.

The protein belongs to the UPF0161 family.

Its subcellular location is the cell membrane. Its function is as follows. Could be involved in insertion of integral membrane proteins into the membrane. The protein is Putative membrane protein insertion efficiency factor of Streptococcus agalactiae serotype III (strain NEM316).